Consider the following 184-residue polypeptide: Elongation factor P 1 (184 aa).

The protein belongs to the elongation factor P family.

It localises to the cytoplasm. The protein operates within protein biosynthesis; polypeptide chain elongation. In terms of biological role, involved in peptide bond synthesis. Stimulates efficient translation and peptide-bond synthesis on native or reconstituted 70S ribosomes in vitro. Probably functions indirectly by altering the affinity of the ribosome for aminoacyl-tRNA, thus increasing their reactivity as acceptors for peptidyl transferase. This Protochlamydia amoebophila (strain UWE25) protein is Elongation factor P 1 (efp1).